A 206-amino-acid polypeptide reads, in one-letter code: Protein-methionine-sulfoxide reductase heme-binding subunit MsrQ (206 aa).

6 helical membrane passes run isoleucine 14–alanine 34, phenylalanine 45–threonine 65, methionine 82–aspartate 102, proline 118–threonine 138, tryptophan 149–tryptophan 169, and glutamine 179–tryptophan 199.

It belongs to the MsrQ family. Heterodimer of a catalytic subunit (MsrP) and a heme-binding subunit (MsrQ). Requires FMN as cofactor. The cofactor is heme b.

Its subcellular location is the cell inner membrane. Its function is as follows. Part of the MsrPQ system that repairs oxidized periplasmic proteins containing methionine sulfoxide residues (Met-O), using respiratory chain electrons. Thus protects these proteins from oxidative-stress damage caused by reactive species of oxygen and chlorine generated by the host defense mechanisms. MsrPQ is essential for the maintenance of envelope integrity under bleach stress, rescuing a wide series of structurally unrelated periplasmic proteins from methionine oxidation. MsrQ provides electrons for reduction to the reductase catalytic subunit MsrP, using the quinone pool of the respiratory chain. The protein is Protein-methionine-sulfoxide reductase heme-binding subunit MsrQ of Bordetella pertussis (strain Tohama I / ATCC BAA-589 / NCTC 13251).